Consider the following 318-residue polypeptide: Ubiquitin-like domain-containing CTD phosphatase 1 (318 aa).

The Ubiquitin-like domain maps to 3-81; sequence VSVIIKWGGQ…IMMMGTREES (79 aa). In terms of domain architecture, FCP1 homology spans 133–294; that stretch reads PRPGKRLLVL…YKLSQYLKEI (162 aa). Mg(2+) is bound by residues Asp143, Asp145, and Asp253.

Mg(2+) is required as a cofactor.

Its subcellular location is the nucleus. It carries out the reaction O-phospho-L-seryl-[protein] + H2O = L-seryl-[protein] + phosphate. The catalysed reaction is O-phospho-L-threonyl-[protein] + H2O = L-threonyl-[protein] + phosphate. Its function is as follows. Dephosphorylates 26S nuclear proteasomes, thereby decreasing their proteolytic activity. Recruited to the 19S regulatory particle of the 26S proteasome where it dephosphorylates 19S component psmc2 which impairs psmc2 ATPase activity and disrupts 26S proteasome assembly. Has also been reported to stimulate the proteolytic activity of the 26S proteasome. The chain is Ubiquitin-like domain-containing CTD phosphatase 1 (ublcp1) from Danio rerio (Zebrafish).